The following is a 143-amino-acid chain: Large ribosomal subunit protein uL16 (143 aa).

The disordered stretch occupies residues 1 to 26 (MSMALLPRRVKYRKSQRGSRKGNATR). The span at 8 to 20 (RRVKYRKSQRGSR) shows a compositional bias: basic residues.

This sequence belongs to the universal ribosomal protein uL16 family. Part of the 50S ribosomal subunit.

Binds 23S rRNA and is also seen to make contacts with the A and possibly P site tRNAs. In Methylacidiphilum infernorum (isolate V4) (Methylokorus infernorum (strain V4)), this protein is Large ribosomal subunit protein uL16.